The chain runs to 298 residues: MQDFSSLLLKLQEYWKDQGCLVIQPYDIPAGAGTFHPATLLRSLDKKPWNVAYVAPSRRPTDGRYGENPNRLGSYYQFQVVIKPSPSNIQELYLKSLEVLGINLNEHDIRFVEDNWESPTLGAWGLGWEVWLDGMEVTQFTYFQQVGGIPCSPIPVEITYGLERLTMYVQKVENILEIEWAKKDNESVRYAQVHLESEYEFSKYHFEVASVERLLEMFKNAQAEALHCLENKLPLPAYDLVMLCSHFFNILDARKAISVAERQNYILQIRDLAKGCAVLYKEQEEEREERLKNALTKA.

Belongs to the class-II aminoacyl-tRNA synthetase family. As to quaternary structure, tetramer of two alpha and two beta subunits.

The protein localises to the cytoplasm. It carries out the reaction tRNA(Gly) + glycine + ATP = glycyl-tRNA(Gly) + AMP + diphosphate. In Helicobacter pylori (strain J99 / ATCC 700824) (Campylobacter pylori J99), this protein is Glycine--tRNA ligase alpha subunit (glyQ).